The sequence spans 203 residues: Thymidylate kinase (203 aa).

Position 7 to 14 (7 to 14 (GGEGAGKT)) interacts with ATP.

This sequence belongs to the thymidylate kinase family.

It carries out the reaction dTMP + ATP = dTDP + ADP. Phosphorylation of dTMP to form dTDP in both de novo and salvage pathways of dTTP synthesis. In Chlamydia muridarum (strain MoPn / Nigg), this protein is Thymidylate kinase (tmk).